The following is a 115-amino-acid chain: Iron-sulfur cluster insertion protein ErpA (115 aa).

Iron-sulfur cluster contacts are provided by Cys43, Cys107, and Cys109.

It belongs to the HesB/IscA family. In terms of assembly, homodimer. The cofactor is iron-sulfur cluster.

In terms of biological role, required for insertion of 4Fe-4S clusters for at least IspG. This chain is Iron-sulfur cluster insertion protein ErpA, found in Photorhabdus laumondii subsp. laumondii (strain DSM 15139 / CIP 105565 / TT01) (Photorhabdus luminescens subsp. laumondii).